The following is a 117-amino-acid chain: NADH-ubiquinone oxidoreductase chain 3 (117 aa).

Transmembrane regions (helical) follow at residues 4 to 24 (IIII…LASI), 60 to 80 (ITII…MIII), and 86 to 106 (IMIW…GLYH).

The protein belongs to the complex I subunit 3 family.

Its subcellular location is the mitochondrion membrane. It catalyses the reaction a ubiquinone + NADH + 5 H(+)(in) = a ubiquinol + NAD(+) + 4 H(+)(out). Its function is as follows. Core subunit of the mitochondrial membrane respiratory chain NADH dehydrogenase (Complex I) that is believed to belong to the minimal assembly required for catalysis. Complex I functions in the transfer of electrons from NADH to the respiratory chain. The immediate electron acceptor for the enzyme is believed to be ubiquinone. The protein is NADH-ubiquinone oxidoreductase chain 3 (mt:ND3) of Drosophila yakuba (Fruit fly).